The following is a 355-amino-acid chain: Replication-associated protein (355 aa).

A CRESS-DNA virus Rep endonuclease domain is found at 11–114 (SHRNVNTFLT…PLAVFERGTF (104 aa)). An RCR-1 motif is present at residues 18–21 (FLTY). E52, H60, and H62 together coordinate a divalent metal cation. The RCR-2 signature appears at 60-62 (HLH). The active-site For DNA cleavage activity is Y100. The RCR-3 motif lies at 100-103 (YILK). Residue E104 participates in a divalent metal cation binding. Over residues 119-128 (SSFQGNPSKG) the composition is skewed to polar residues. Residues 119–138 (SSFQGNPSKGNSEKKPSKDE) are disordered. The span at 129-138 (NSEKKPSKDE) shows a compositional bias: basic and acidic residues. The tract at residues 175–187 (SANKLFPEIQEEF) is oligomerization. An ATP-binding site is contributed by 229–236 (GPTRTGKS). A transactivation region spans residues 252–270 (VDWSSYNEDAIYNIVDDIP). The short motif at 292–303 (KYGKKKKVQMKS) is the Nuclear localization signal element.

This sequence belongs to the geminiviridae Rep protein family. Homooligomer. Rep binds to repeated DNA motifs (iterons). Forms the O-complex, which is a Rep-DNA complex involved in the initiation of RCR. Part of the C- and V-complexes which are RepA-Rep-DNA complexes involved in the c-sense and v-sense transcription. Mg(2+) is required as a cofactor. Requires Mn(2+) as cofactor.

The protein resides in the host nucleus. In terms of biological role, essential for the replication of viral ssDNA. The closed circular ssDNA genome is first converted to a superhelical dsDNA. Rep binds a specific region at the genome origin of replication. It introduces an endonucleolytic nick within the conserved sequence 5'-TAATATTAC-3' in the intergenic region of the genome present in all geminiviruses, thereby initiating the rolling circle replication (RCR). Following cleavage, binds covalently to the 5'-phosphate of DNA as a tyrosyl ester. The cleavage gives rise to a free 3'-OH that serves as a primer for the cellular DNA polymerase. The polymerase synthesizes the (+) strand DNA by rolling circle mechanism. After one round of replication, a Rep-catalyzed nucleotidyl transfer reaction releases a circular single-stranded virus genome, thereby terminating the replication. Displays origin-specific DNA cleavage, nucleotidyl transferase, ATPase and helicase activities. Acts as an inhibitor of C-sense gene transcription. The chain is Replication-associated protein from Maize streak virus genotype B (isolate Tas) (MSV).